A 279-amino-acid polypeptide reads, in one-letter code: MEPRVAELKQKIEDTLCPFGFEVYPFQVAWYNELLPPAFHLPFPGPTLAFLVLSTPAMFDRALKPFLKSCHFQTLRDPVDQCVSYHLRSVTEKFPEVHMEVIADYEVHPNRRPKILAQTAAHVAGAAYYYQRQDVDADPWGTQHIAGVCIHPRFGGWFAIRGVMLLPGIEVPNLPPRKPPDCVPTRAGRITLLEGFNFHWRDWTYRDAVTPEERYSEEQKIYFSTPPAQRLALLGLAQPSEHPSTTSELPLSLLTKPQNSRRARSWLSPSVSPPVSPGP.

Residues D104, 115 to 118 (ILAQ), 129 to 131 (YYQ), C149, and I160 contribute to the substrate site. The interval 239–279 (PSEHPSTTSELPLSLLTKPQNSRRARSWLSPSVSPPVSPGP) is disordered. Residues 243–257 (PSTTSELPLSLLTKP) are compositionally biased toward low complexity. 3 positions are modified to phosphoserine: S247, S272, and S276.

It belongs to the MMACHC family. Monomer in the absence of bound substrate. Homodimer; dimerization is triggered by binding to FMN or adenosylcobalamin. Interacts with LMBRD1 and ABCD4; the interaction ensures the transport of cobalamin from the lysosome to the cytoplasm. Forms a multiprotein complex with MMADHC, MTR and MTRR; the interaction with MTR could modulate MMACHC-dependent processing of cobalamin. Heterodimer with MMADHC; the interaction might play a role in the regulation of the balance between AdoCbl and MeCbl synthesis. FAD is required as a cofactor. FMN serves as cofactor. As to expression, detected in liver and kidney (at protein level). Detected in embryos.

It localises to the cytoplasm. The protein resides in the cytosol. The catalysed reaction is 2 cob(II)alamin-[cyanocobalamin reductase] + 2 hydrogen cyanide + NADP(+) = 2 cyanocob(III)alamin + 2 apo-[cyanocobalamin reductase] + NADPH + H(+). It catalyses the reaction apo-[alkylcobalamin reductase] + an R-cob(III)alamin + glutathione = cob(I)alamin-[alkylcobalamin reductase] + an S-substituted glutathione + H(+). The enzyme catalyses apo-[alkylcobalamin reductase] + methylcob(III)alamin + glutathione = S-methyl glutathione + cob(I)alamin-[alkylcobalamin reductase] + H(+). It carries out the reaction apo-[alkylcobalamin reductase] + adenosylcob(III)alamin + glutathione = S-adenosylglutathione + cob(I)alamin-[alkylcobalamin reductase] + H(+). Its function is as follows. Cobalamin (vitamin B12) cytosolic chaperone that catalyzes the reductive decyanation of cyanocob(III)alamin (cyanocobalamin, CNCbl) to yield cob(II)alamin and cyanide, using FAD or FMN as cofactors and NADPH as cosubstrate. Cyanocobalamin constitutes the inactive form of vitamin B12 introduced from the diet, and is converted into the active cofactors methylcobalamin (MeCbl) involved in methionine biosynthesis, and 5'-deoxyadenosylcobalamin (AdoCbl) involved in the TCA cycle. Forms a complex with the lysosomal transporter ABCD4 and its chaperone LMBRD1, to transport cobalamin across the lysosomal membrane into the cytosol. The processing of cobalamin in the cytosol occurs in a multiprotein complex composed of at least MMACHC, MMADHC, MTRR (methionine synthase reductase) and MTR (methionine synthase) which may contribute to shuttle safely and efficiently cobalamin towards MTR in order to produce methionine. Also acts as a glutathione transferase by catalyzing the dealkylation of the alkylcob(III)alamins MeCbl and AdoCbl, using the thiolate of glutathione for nucleophilic displacement to generate cob(I)alamin and the corresponding glutathione thioether. The conversion of incoming MeCbl or AdoCbl into a common intermediate cob(I)alamin is necessary to meet the cellular needs for both cofactors. Cysteine and homocysteine cannot substitute for glutathione in this reaction. The protein is Cyanocobalamin reductase / alkylcobalamin dealkylase of Mus musculus (Mouse).